Here is a 292-residue protein sequence, read N- to C-terminus: 4-amino-L-phenylalanine/4-methylamino-L-phenylalanine methyltransferase (292 aa).

Position 128-132 (128-132) interacts with S-adenosyl-L-methionine; that stretch reads CAGPG.

The protein belongs to the protein N5-glutamine methyltransferase family.

The catalysed reaction is 4-amino-L-phenylalanine + S-adenosyl-L-methionine = 4-methylamino-L-phenylalanine + S-adenosyl-L-homocysteine + H(+). The enzyme catalyses 4-methylamino-L-phenylalanine + S-adenosyl-L-methionine = 4-dimethylamino-L-phenylalanine + S-adenosyl-L-homocysteine + H(+). Its pathway is antibiotic biosynthesis. Involved in pristinamycin I biosynthesis. Catalyzes the SAM-dependent methylation of 4-amino-L-phenylalanine (PAPA) to 4-methylamino-L-phenylalanine (MMPAPA), and of MMPAPA to 4-dimethylamino-L-phenylalanine (DMPAPA). This chain is 4-amino-L-phenylalanine/4-methylamino-L-phenylalanine methyltransferase, found in Streptomyces pristinaespiralis.